Consider the following 177-residue polypeptide: Large ribosomal subunit protein uL6 (177 aa).

This sequence belongs to the universal ribosomal protein uL6 family. As to quaternary structure, part of the 50S ribosomal subunit.

Functionally, this protein binds to the 23S rRNA, and is important in its secondary structure. It is located near the subunit interface in the base of the L7/L12 stalk, and near the tRNA binding site of the peptidyltransferase center. This chain is Large ribosomal subunit protein uL6, found in Salmonella arizonae (strain ATCC BAA-731 / CDC346-86 / RSK2980).